The following is a 358-amino-acid chain: Tribbles homolog 3 (358 aa).

The interval 1-54 (MRATPLAAPAGSLSRKKRLELDDNLDTERPVQKRARSGPQPRLPPCLLPLSPPT) is disordered. The tract at residues 1-127 (MRATPLAAPA…KHVARPTEVL (127 aa)) is interaction with DDIT3/CHOP. S12 carries the post-translational modification Phosphoserine. Positions 41 to 54 (PRLPPCLLPLSPPT) are enriched in pro residues. The Protein kinase domain maps to 68–316 (LGPYVLLEPE…TGILLHPWLR (249 aa)).

It belongs to the protein kinase superfamily. CAMK Ser/Thr protein kinase family. Tribbles subfamily. Interacts with AKT1, AKT2, MAP2K1 and MAP2K7. Interacts with ATF4. Interacts with DDIT3/CHOP and inhibits its interaction with EP300/P300. Interacts with APOBEC3C. Interacts (via N-terminus) with APOBEC3A. Interacts with RELA. In terms of tissue distribution, highest expression in liver, pancreas, peripheral blood leukocytes and bone marrow. Also highly expressed in a number of primary lung, colon and breast tumors. Expressed in spleen, thymus, and prostate and is undetectable in other examined tissues, including testis, ovary, small intestine, colon, leukocyte, heart, brain, placenta, lung, skeletal muscle, and kidney.

The protein resides in the nucleus. Functionally, inactive protein kinase which acts as a regulator of the integrated stress response (ISR), a process for adaptation to various stress. Inhibits the transcriptional activity of DDIT3/CHOP and is involved in DDIT3/CHOP-dependent cell death during ER stress. May play a role in programmed neuronal cell death but does not appear to affect non-neuronal cells. Acts as a negative feedback regulator of the ATF4-dependent transcription during the ISR: while TRIB3 expression is promoted by ATF4, TRIB3 protein interacts with ATF4 and inhibits ATF4 transcription activity. Disrupts insulin signaling by binding directly to Akt kinases and blocking their activation. May bind directly to and mask the 'Thr-308' phosphorylation site in AKT1. Interacts with the NF-kappa-B transactivator p65 RELA and inhibits its phosphorylation and thus its transcriptional activation activity. Interacts with MAPK kinases and regulates activation of MAP kinases. Can inhibit APOBEC3A editing of nuclear DNA. This chain is Tribbles homolog 3 (TRIB3), found in Homo sapiens (Human).